We begin with the raw amino-acid sequence, 177 residues long: Coatomer subunit zeta-1 (177 aa).

This sequence belongs to the adaptor complexes small subunit family. Oligomeric complex that consists of at least the alpha, beta, beta', gamma, delta, epsilon and zeta subunits.

Its subcellular location is the cytoplasm. It is found in the golgi apparatus membrane. The protein resides in the cytoplasmic vesicle. It localises to the COPI-coated vesicle membrane. In terms of biological role, the coatomer is a cytosolic protein complex that binds to dilysine motifs and reversibly associates with Golgi non-clathrin-coated vesicles, which further mediate biosynthetic protein transport from the ER, via the Golgi up to the trans Golgi network. Coatomer complex is required for budding from Golgi membranes, and is essential for the retrograde Golgi-to-ER transport of dilysine-tagged proteins. The zeta subunit may be involved in regulating the coat assembly and, hence, the rate of biosynthetic protein transport due to its association-dissociation properties with the coatomer complex. The polypeptide is Coatomer subunit zeta-1 (Arabidopsis thaliana (Mouse-ear cress)).